The sequence spans 360 residues: Holliday junction branch migration complex subunit RuvB (360 aa).

A disordered region spans residues 1 to 23 (MIASVGDSRYYPKSVANGEKSDQ). A large ATPase domain (RuvB-L) region spans residues 12–204 (PKSVANGEKS…FGIVLRLEFY (193 aa)). Residues Leu-43, Arg-44, Gly-85, Lys-88, Thr-89, Thr-90, 151–153 (EDY), Arg-194, Tyr-204, and Arg-241 contribute to the ATP site. Thr-89 is a Mg(2+) binding site. The interval 205–275 (TTEDLKIILK…TAQKALEMLE (71 aa)) is small ATPAse domain (RuvB-S). The tract at residues 278 to 360 (QHGFDEVDRR…KPPKKQDSLF (83 aa)) is head domain (RuvB-H). Positions 333 and 338 each coordinate DNA.

The protein belongs to the RuvB family. Homohexamer. Forms an RuvA(8)-RuvB(12)-Holliday junction (HJ) complex. HJ DNA is sandwiched between 2 RuvA tetramers; dsDNA enters through RuvA and exits via RuvB. An RuvB hexamer assembles on each DNA strand where it exits the tetramer. Each RuvB hexamer is contacted by two RuvA subunits (via domain III) on 2 adjacent RuvB subunits; this complex drives branch migration. In the full resolvosome a probable DNA-RuvA(4)-RuvB(12)-RuvC(2) complex forms which resolves the HJ.

The protein resides in the cytoplasm. It carries out the reaction ATP + H2O = ADP + phosphate + H(+). Its function is as follows. The RuvA-RuvB-RuvC complex processes Holliday junction (HJ) DNA during genetic recombination and DNA repair, while the RuvA-RuvB complex plays an important role in the rescue of blocked DNA replication forks via replication fork reversal (RFR). RuvA specifically binds to HJ cruciform DNA, conferring on it an open structure. The RuvB hexamer acts as an ATP-dependent pump, pulling dsDNA into and through the RuvAB complex. RuvB forms 2 homohexamers on either side of HJ DNA bound by 1 or 2 RuvA tetramers; 4 subunits per hexamer contact DNA at a time. Coordinated motions by a converter formed by DNA-disengaged RuvB subunits stimulates ATP hydrolysis and nucleotide exchange. Immobilization of the converter enables RuvB to convert the ATP-contained energy into a lever motion, pulling 2 nucleotides of DNA out of the RuvA tetramer per ATP hydrolyzed, thus driving DNA branch migration. The RuvB motors rotate together with the DNA substrate, which together with the progressing nucleotide cycle form the mechanistic basis for DNA recombination by continuous HJ branch migration. Branch migration allows RuvC to scan DNA until it finds its consensus sequence, where it cleaves and resolves cruciform DNA. The sequence is that of Holliday junction branch migration complex subunit RuvB from Koribacter versatilis (strain Ellin345).